A 109-amino-acid polypeptide reads, in one-letter code: uncharacterized protein (109 aa).

Residues 75–95 (MALFHTVFILWPHFCGILWTV) traverse the membrane as a helical segment.

The protein resides in the membrane. This is an uncharacterized protein from Saccharomyces cerevisiae (strain ATCC 204508 / S288c) (Baker's yeast).